Reading from the N-terminus, the 109-residue chain is Cell division protein ZapA (109 aa).

The stretch at Pro21–Gln97 forms a coiled coil.

It belongs to the ZapA family. Type 1 subfamily. In terms of assembly, homodimer. Interacts with FtsZ.

Its subcellular location is the cytoplasm. Activator of cell division through the inhibition of FtsZ GTPase activity, therefore promoting FtsZ assembly into bundles of protofilaments necessary for the formation of the division Z ring. It is recruited early at mid-cell but it is not essential for cell division. The protein is Cell division protein ZapA of Sodalis glossinidius (strain morsitans).